The following is a 647-amino-acid chain: CRE-binding bZIP protein SKO1 (647 aa).

Disordered stretches follow at residues 1-119 (MSSE…GSKR), 135-204 (STTN…QMPG), 305-331 (TPTT…TSTK), and 353-429 (KENE…EEQE). Residues 51 to 85 (RNNSTSTITQHSQRSTHSLNSIPEENGNSTVTDNS) are compositionally biased toward polar residues. A Phosphoserine modification is found at Ser-94. At Thr-113 the chain carries Phosphothreonine. 2 stretches are compositionally biased toward low complexity: residues 138–194 (NPSQ…SGNG) and 305–329 (TPTT…PNTS). Polar residues-rich tracts occupy residues 357 to 368 (NLTTQIENNDQF) and 396 to 405 (RKNSAVTTAP). Phosphoserine is present on Ser-399. Positions 429–492 (ERKRKEFLER…PSSSSNSQFN (64 aa)) constitute a bZIP domain. Residues 430–451 (RKRKEFLERNRVAASKFRKRKK) are basic motif. The interval 454-461 (IKKIENDL) is leucine-zipper. Residue Ser-558 is modified to Phosphoserine.

Belongs to the bZIP family.

It is found in the nucleus. Binds to the CRE motif 5'-TGACGTCA-3' and acts as a repressor of transcription of the SUC2 gene and most probably other genes. This Saccharomyces cerevisiae (strain ATCC 204508 / S288c) (Baker's yeast) protein is CRE-binding bZIP protein SKO1 (SKO1).